The following is a 223-amino-acid chain: MGQKGCPIGFRTGVTKKWRSLWYGNKQEFGKFLIEDVRIRQFLRKKPSCQGAAGFVVRRMSGKIEVTIQTARPGLVIGKKGAEVDLLKEELRALTGKEVWLEIAEIKRPELNAKLVADNIARQIERRVSFRRAMKKAMQSVMDAGAVGVKIQVSGRLAGAEIARSEWYKNGRVPLHTLRADIDYATACAETTYGIIGIKVWINLGENSSSTTPNNPAAPSAAA.

Residues isoleucine 39–lysine 107 enclose the KH type-2 domain.

The protein belongs to the universal ribosomal protein uS3 family. In terms of assembly, part of the 30S ribosomal subunit. Forms a tight complex with proteins S10 and S14.

In terms of biological role, binds the lower part of the 30S subunit head. Binds mRNA in the 70S ribosome, positioning it for translation. This is Small ribosomal subunit protein uS3 from Chlamydia pneumoniae (Chlamydophila pneumoniae).